The sequence spans 525 residues: Cytochrome P450 4V2 (525 aa).

A helical transmembrane segment spans residues 13–33 (LLLWGAASALSLAGASLVLSL). Residues glutamate 329 and cysteine 467 each contribute to the heme site.

This sequence belongs to the cytochrome P450 family. It depends on heme as a cofactor. Broadly expressed. Detected in heart, brain, placenta, lung, liver, skeletal muscle, kidney, pancreas, retina, retinal pigment epithelium (RPE) and lymphocytes.

The protein resides in the endoplasmic reticulum membrane. The catalysed reaction is dodecanoate + reduced [NADPH--hemoprotein reductase] + O2 = 12-hydroxydodecanoate + oxidized [NADPH--hemoprotein reductase] + H2O + H(+). It carries out the reaction tetradecanoate + reduced [NADPH--hemoprotein reductase] + O2 = 14-hydroxytetradecanoate + oxidized [NADPH--hemoprotein reductase] + H2O + H(+). It catalyses the reaction hexadecanoate + reduced [NADPH--hemoprotein reductase] + O2 = 16-hydroxyhexadecanoate + oxidized [NADPH--hemoprotein reductase] + H2O + H(+). The enzyme catalyses (5Z,8Z,11Z,14Z,17Z)-eicosapentaenoate + reduced [NADPH--hemoprotein reductase] + O2 = 20-hydroxy-(5Z,8Z,11Z,14Z,17Z)-eicosapentaenoate + oxidized [NADPH--hemoprotein reductase] + H2O + H(+). The catalysed reaction is (4Z,7Z,10Z,13Z,16Z,19Z)-docosahexaenoate + reduced [NADPH--hemoprotein reductase] + O2 = 22-hydroxy-(4Z,7Z,10Z,13Z,16Z,19Z)-docosahexaenoate + oxidized [NADPH--hemoprotein reductase] + H2O + H(+). It participates in lipid metabolism; fatty acid metabolism. With respect to regulation, inhibited by N-hydroxy-N'-(4-n-butyl-2-methylphenyl formamidine)(HET0016) with an IC(50) of 38 nM. Its function is as follows. A cytochrome P450 monooxygenase involved in fatty acid metabolism in the eye. Catalyzes the omega-hydroxylation of polyunsaturated fatty acids (PUFAs) docosahexaenoate (DHA) and its precursor eicosapentaenoate (EPA), and may contribute to the homeostasis of these retinal PUFAs. Omega hydroxylates saturated fatty acids such as laurate, myristate and palmitate, the catalytic efficiency decreasing in the following order: myristate &gt; laurate &gt; palmitate (C14&gt;C12&gt;C16). Mechanistically, uses molecular oxygen inserting one oxygen atom into a substrate, and reducing the second into a water molecule, with two electrons provided by NADPH via cytochrome P450 reductase (CPR; NADPH-ferrihemoprotein reductase). The polypeptide is Cytochrome P450 4V2 (CYP4V2) (Homo sapiens (Human)).